The following is a 458-amino-acid chain: Argininosuccinate lyase (458 aa).

Belongs to the lyase 1 family. Argininosuccinate lyase subfamily.

It is found in the cytoplasm. It carries out the reaction 2-(N(omega)-L-arginino)succinate = fumarate + L-arginine. It participates in amino-acid biosynthesis; L-arginine biosynthesis; L-arginine from L-ornithine and carbamoyl phosphate: step 3/3. The chain is Argininosuccinate lyase from Vibrio cholerae serotype O1 (strain ATCC 39541 / Classical Ogawa 395 / O395).